The chain runs to 341 residues: HTH-type transcriptional repressor PurR (341 aa).

Residues Ala-2–Val-56 form the HTH lacI-type domain. Residues Ile-4–Asn-23 constitute a DNA-binding region (H-T-H motif). The DNA-binding element occupies Ser-48–Val-56. Residues Tyr-73, Arg-190, Thr-192, Phe-221, and Asp-275 each coordinate hypoxanthine.

As to quaternary structure, homodimer.

The protein operates within purine metabolism; purine nucleotide biosynthesis [regulation]. In terms of biological role, is the main repressor of the genes involved in the de novo synthesis of purine nucleotides, regulating purB, purC, purEK, purF, purHD, purL, purMN and guaBA expression. PurR is allosterically activated to bind its cognate DNA by binding the purine corepressors, hypoxanthine or guanine, thereby effecting transcription repression. This Proteus mirabilis (strain HI4320) protein is HTH-type transcriptional repressor PurR.